A 245-amino-acid chain; its full sequence is Ribonuclease PH (245 aa).

Residues Arg87 and 125–127 each bind phosphate; that span reads GTR.

The protein belongs to the RNase PH family. In terms of assembly, homohexameric ring arranged as a trimer of dimers.

The catalysed reaction is tRNA(n+1) + phosphate = tRNA(n) + a ribonucleoside 5'-diphosphate. Its function is as follows. Phosphorolytic 3'-5' exoribonuclease that plays an important role in tRNA 3'-end maturation. Removes nucleotide residues following the 3'-CCA terminus of tRNAs; can also add nucleotides to the ends of RNA molecules by using nucleoside diphosphates as substrates, but this may not be physiologically important. Probably plays a role in initiation of 16S rRNA degradation (leading to ribosome degradation) during starvation. This Streptomyces coelicolor (strain ATCC BAA-471 / A3(2) / M145) protein is Ribonuclease PH.